The primary structure comprises 222 residues: L-serine dehydratase, beta chain (222 aa).

Residues 150 to 222 (TILLEYPEQR…RFTTAKYVEV (73 aa)) form the ACT domain.

This sequence belongs to the iron-sulfur dependent L-serine dehydratase family. Heterooctamer of four alpha chains and four beta chains. [4Fe-4S] cluster is required as a cofactor.

The enzyme catalyses L-serine = pyruvate + NH4(+). It functions in the pathway carbohydrate biosynthesis; gluconeogenesis. This Peptoniphilus asaccharolyticus (Peptostreptococcus asaccharolyticus) protein is L-serine dehydratase, beta chain (sdhB).